The chain runs to 196 residues: Putative NADH dehydrogenase/NAD(P)H nitroreductase SGR_2476 (196 aa).

It belongs to the nitroreductase family. HadB/RutE subfamily. FMN is required as a cofactor.

In Streptomyces griseus subsp. griseus (strain JCM 4626 / CBS 651.72 / NBRC 13350 / KCC S-0626 / ISP 5235), this protein is Putative NADH dehydrogenase/NAD(P)H nitroreductase SGR_2476.